The sequence spans 490 residues: Cytochrome P450 2W1 (490 aa).

Residues 1 to 22 form the signal peptide; sequence MALLLLLFLGLLGLWGLLCACA. A glycan (N-linked (GlcNAc...) asparagine) is linked at Asn-177. Cys-433 lines the heme pocket.

This sequence belongs to the cytochrome P450 family. Requires heme as cofactor. Very low levels are detected in fetal and adult tissues. Highly expressed in several tumor samples, in particular colon and adrenal tumors.

The protein resides in the endoplasmic reticulum lumen. Its subcellular location is the cell membrane. It is found in the microsome membrane. It carries out the reaction all-trans-retinoate + reduced [NADPH--hemoprotein reductase] + O2 = all-trans-4-hydroxyretinoate + oxidized [NADPH--hemoprotein reductase] + H2O + H(+). The catalysed reaction is 1-(9Z-octadecenoyl)-sn-glycero-3-phosphocholine + reduced [NADPH--hemoprotein reductase] + O2 = 1-[8-hydroxy-(9Z)-octadecenoyl]-sn-glycero-3-phosphocholine + oxidized [NADPH--hemoprotein reductase] + H2O + H(+). It catalyses the reaction 1-(9Z-octadecenoyl)-sn-glycero-3-phosphocholine + reduced [NADPH--hemoprotein reductase] + O2 = 1-[11-hydroxy-(9Z)-octadecenoyl]-sn-glycero-3-phosphocholine + oxidized [NADPH--hemoprotein reductase] + H2O + H(+). The enzyme catalyses 1-(9Z-octadecenoyl)-sn-glycero-3-phosphocholine + reduced [NADPH--hemoprotein reductase] + O2 = 1-[(9S,10R)-epoxy-octadecanoyl]-sn-glycero-3-phosphocholine + oxidized [NADPH--hemoprotein reductase] + H2O + H(+). It carries out the reaction 1-(9Z-octadecenoyl)-sn-glycero-3-phosphocholine + reduced [NADPH--hemoprotein reductase] + O2 = 1-[(9R,10S)-epoxy-octadecanoyl]-sn-glycero-3-phosphocholine + oxidized [NADPH--hemoprotein reductase] + H2O + H(+). Functionally, a cytochrome P450 monooxygenase that may play a role in retinoid and phospholipid metabolism. Catalyzes the hydroxylation of saturated carbon hydrogen bonds. Hydroxylates all trans-retinoic acid (atRA) to 4-hydroxyretinoate and may regulate atRA clearance. Other retinoids such as all-trans retinol and all-trans retinal are potential endogenous substrates. Catalyzes both epoxidation of double bonds and hydroxylation of carbon hydrogen bonds of the fatty acyl chain of 1-acylphospholipids/2-lysophospholipids. Can metabolize various lysophospholipids classes including lysophosphatidylcholines (LPCs), lysophosphatidylinositols (LPIs), lysophosphatidylserines (LPSs), lysophosphatidylglycerols (LPGs), lysophosphatidylethanolamines (LPEs) and lysophosphatidic acids (LPAs). Has low or no activity toward 2-acylphospholipids/1-lysophospholipids, diacylphospholipids and free fatty acids. May play a role in tumorigenesis by activating procarcinogens such as aflatoxin B1, polycyclic aromatic hydrocarbon dihydrodiols and aromatic amines. Mechanistically, uses molecular oxygen inserting one oxygen atom into a substrate, and reducing the second into a water molecule, with two electrons provided by NADPH via cytochrome P450 reductase (CPR; NADPH-ferrihemoprotein reductase). This chain is Cytochrome P450 2W1, found in Homo sapiens (Human).